The primary structure comprises 344 residues: Lipase chaperone (344 aa).

Residues 14–34 (AMVYGVVGLAAIAGVAMWSGA) traverse the membrane as a helical segment.

It belongs to the lipase chaperone family.

Its subcellular location is the cell inner membrane. Functionally, may be involved in the folding of the extracellular lipase during its passage through the periplasm. The polypeptide is Lipase chaperone (Burkholderia lata (strain ATCC 17760 / DSM 23089 / LMG 22485 / NCIMB 9086 / R18194 / 383)).